Reading from the N-terminus, the 103-residue chain is Large ribosomal subunit protein bL21 (103 aa).

It belongs to the bacterial ribosomal protein bL21 family. As to quaternary structure, part of the 50S ribosomal subunit. Contacts protein L20.

Functionally, this protein binds to 23S rRNA in the presence of protein L20. The chain is Large ribosomal subunit protein bL21 from Legionella pneumophila (strain Lens).